Reading from the N-terminus, the 268-residue chain is Regulation of nuclear pre-mRNA domain-containing protein 1A (268 aa).

The CID domain maps to 1-133; that stretch reads MSAFSEAALE…QLRQALYGDR (133 aa).

Belongs to the UPF0400 (RTT103) family. In terms of assembly, may form a heterodimer with RPRD1B. Associates with the RNA polymerase II subunit POLR2A (via CTD phosphorylated at 'Ser-2' and 'Ser-7' of the heptad repeats).

It is found in the nucleus. In terms of biological role, interacts with phosphorylated C-terminal heptapeptide repeat domain (CTD) of the largest RNA polymerase II subunit POLR2A, and participates in dephosphorylation of the CTD by RPAP2. May act as a negative regulator of cyclin-D1 (CCND1) and cyclin-E (CCNE1) in the cell cycle. This Gallus gallus (Chicken) protein is Regulation of nuclear pre-mRNA domain-containing protein 1A (RPRD1A).